Consider the following 765-residue polypeptide: Single-minded homolog 1 (765 aa).

The region spanning 1-53 is the bHLH domain; that stretch reads MKEKSKNAARTRREKENSEFYELAKLLPLPSAITSQLDKASIIRLTTSYLKMR. PAS domains are found at residues 77 to 147 and 218 to 288; these read GREL…QPYH and PPSA…LVKG. The 44-residue stretch at 292–335 folds into the PAC domain; the sequence is TKYYRFLAKQGGWVWVQSYATIVHNSRSSRPHCIVSVNYVLTDT. Residues 336–765 enclose the Single-minded C-terminal domain; that stretch reads EYKGLQLSLD…GTSVIITNGS (430 aa). Low complexity-rich tracts occupy residues 352 to 365 and 373 to 385; these read PTFS…PTIS and SRLS…SRTS. Disordered regions lie at residues 352 to 428 and 527 to 560; these read PTFS…PGSQ and WDED…PHEP. Positions 368-387 match the Nuclear localization signal motif; the sequence is RKGAKSRLSSSKSKSRTSPY. Residues 394 to 404 are compositionally biased toward basic and acidic residues; the sequence is HTERSESDHDS.

As to quaternary structure, efficient DNA binding requires dimerization with another bHLH protein. Heterodimer; forms a heterodimer with ARNT, ARNT2. As to expression, detected in lung, skeletal muscle and kidney. During fetal development it is found in the CNS, developing kidney, mesodermal and endodermal tissues, including developing somites, mesonephric duct, and foregut.

The protein resides in the nucleus. Functionally, transcriptional factor that may have pleiotropic effects during embryogenesis and in the adult. The protein is Single-minded homolog 1 (Sim1) of Mus musculus (Mouse).